Reading from the N-terminus, the 360-residue chain is Phosphoserine aminotransferase (360 aa).

Arg-41 lines the L-glutamate pocket. Residues Trp-101, Thr-152, Asp-172, and Gln-195 each coordinate pyridoxal 5'-phosphate. Lys-196 carries the N6-(pyridoxal phosphate)lysine modification. 237–238 (NT) lines the pyridoxal 5'-phosphate pocket.

It belongs to the class-V pyridoxal-phosphate-dependent aminotransferase family. SerC subfamily. In terms of assembly, homodimer. Requires pyridoxal 5'-phosphate as cofactor.

The protein localises to the cytoplasm. It catalyses the reaction O-phospho-L-serine + 2-oxoglutarate = 3-phosphooxypyruvate + L-glutamate. The enzyme catalyses 4-(phosphooxy)-L-threonine + 2-oxoglutarate = (R)-3-hydroxy-2-oxo-4-phosphooxybutanoate + L-glutamate. It participates in amino-acid biosynthesis; L-serine biosynthesis; L-serine from 3-phospho-D-glycerate: step 2/3. It functions in the pathway cofactor biosynthesis; pyridoxine 5'-phosphate biosynthesis; pyridoxine 5'-phosphate from D-erythrose 4-phosphate: step 3/5. Catalyzes the reversible conversion of 3-phosphohydroxypyruvate to phosphoserine and of 3-hydroxy-2-oxo-4-phosphonooxybutanoate to phosphohydroxythreonine. The protein is Phosphoserine aminotransferase of Burkholderia lata (strain ATCC 17760 / DSM 23089 / LMG 22485 / NCIMB 9086 / R18194 / 383).